A 303-amino-acid polypeptide reads, in one-letter code: Haloalkane dehalogenase (303 aa).

Positions 48–192 (PVLLLHGEPS…GTVTKLSQAV (145 aa)) constitute an AB hydrolase-1 domain. D123 (nucleophile) is an active-site residue. Catalysis depends on D250, which acts as the Proton donor. Catalysis depends on H280, which acts as the Proton acceptor.

It belongs to the haloalkane dehalogenase family. Type 1 subfamily. In terms of assembly, monomer.

The enzyme catalyses 1-haloalkane + H2O = a halide anion + a primary alcohol + H(+). Its function is as follows. Catalyzes hydrolytic cleavage of carbon-halogen bonds in halogenated aliphatic compounds, leading to the formation of the corresponding primary alcohols, halide ions and protons. The polypeptide is Haloalkane dehalogenase (Psychrobacter cryohalolentis (strain ATCC BAA-1226 / DSM 17306 / VKM B-2378 / K5)).